Consider the following 182-residue polypeptide: D-lyxose ketol-isomerase (182 aa).

Mn(2+) is bound by residues His74, His76, Glu87, and His142.

The protein belongs to the D-lyxose ketol-isomerase family. Homodimer. It depends on Mn(2+) as a cofactor.

The enzyme catalyses D-lyxose = D-xylulose. Functionally, sugar isomerase that catalyzes the reversible isomerization of D-lyxose to D-xylulose. Shows weak activity with D-mannose and L-ribose. This Cohnella laeviribosi protein is D-lyxose ketol-isomerase.